The sequence spans 722 residues: Phenylalanine ammonia-lyase lenB (722 aa).

Tyr83 serves as the catalytic Proton donor/acceptor. The tract at residues 117-136 (LPTDRSSSRPSSRYPHGLRS) is disordered. A cross-link (5-imidazolinone (Ala-Gly)) is located at residues 190–192 (ASG). Ser191 is subject to 2,3-didehydroalanine (Ser). 7 residues coordinate (E)-cinnamate: Asn247, Gln334, Arg340, Asn370, Lys441, Glu469, and Asn472.

The protein belongs to the PAL/histidase family. Post-translationally, contains an active site 4-methylidene-imidazol-5-one (MIO), which is formed autocatalytically by cyclization and dehydration of residues Ala-Ser-Gly.

The enzyme catalyses L-phenylalanine = (E)-cinnamate + NH4(+). Its pathway is alkaloid biosynthesis. Its function is as follows. Phenylalanine ammonia-lyase; part of the gene cluster that mediates the biosynthesis of the ergot alkaloids lentopeptins A and B. Within the pathway, lenB provides the cinnamic acid starter unit for the synthesis of the N-acyldiketopiperazine intermediate by the NRPS lenA. Cinnamic acid is condensed with the Ala-Val-Ala peptide chain by lenA which leads to the N-acyldiketopiperazine intermediate which in turn is converted into lentopeptins A and B by the cytochrome P450 monooxygenase lenC. The protein is Phenylalanine ammonia-lyase lenB of Aspergillus lentulus.